We begin with the raw amino-acid sequence, 1032 residues long: Probable LRR receptor-like serine/threonine-protein kinase At1g56130 (1032 aa).

A signal peptide spans 1–29 (MTRIRRSPCLLLLIIWFMCIAGSVQVVQS). Topologically, residues 30 to 636 (QNQTGATTHP…PPSKGKNRTG (607 aa)) are extracellular. N-linked (GlcNAc...) asparagine glycosylation is found at Asn-31, Asn-61, and Asn-95. LRR repeat units follow at residues 101 to 122 (ITNI…LWTL), 123 to 146 (TYLT…IGNL), 148 to 170 (RMQW…IGLL), 171 to 194 (TDLR…IGRC), 196 to 217 (KLQQ…SFAN), 242 to 265 (WTKL…SFSN), 290 to 314 (MKSL…IGEH), 315 to 338 (SSLR…LFNL), 340 to 360 (QLTH…TQKT), and 361 to 385 (QSLR…SLPS). Asn-145 is a glycosylation site (N-linked (GlcNAc...) asparagine). Asn-182 is a glycosylation site (N-linked (GlcNAc...) asparagine). N-linked (GlcNAc...) asparagine glycosylation is found at Asn-265, Asn-302, Asn-337, Asn-348, and Asn-352. 3 N-linked (GlcNAc...) asparagine glycosylation sites follow: Asn-394, Asn-580, and Asn-633. Residues 637-657 (TIVGVIVGVGLLSILAGVVMF) form a helical membrane-spanning segment. The Cytoplasmic portion of the chain corresponds to 658 to 1032 (TIRKRRKRYT…MLGSKINEGR (375 aa)). The residue at position 683 (Thr-683) is a Phosphothreonine. The region spanning 694–968 (FDPSNKLGEG…VAMLSGDVEI (275 aa)) is the Protein kinase domain. Residues 700-708 (LGEGGFGPV) and Lys-722 contribute to the ATP site. The residue at position 767 (Tyr-767) is a Phosphotyrosine. Asp-818 (proton acceptor) is an active-site residue. Residues Ser-822 and Ser-851 each carry the phosphoserine modification. Phosphothreonine is present on residues Thr-852 and Thr-857. Tyr-865 bears the Phosphotyrosine mark. A disordered region spans residues 1008–1032 (APGSEISPRDSDFKPMLGSKINEGR).

It belongs to the protein kinase superfamily. Ser/Thr protein kinase family.

The protein resides in the cell membrane. The catalysed reaction is L-seryl-[protein] + ATP = O-phospho-L-seryl-[protein] + ADP + H(+). It catalyses the reaction L-threonyl-[protein] + ATP = O-phospho-L-threonyl-[protein] + ADP + H(+). The protein is Probable LRR receptor-like serine/threonine-protein kinase At1g56130 of Arabidopsis thaliana (Mouse-ear cress).